A 310-amino-acid chain; its full sequence is 2-dehydro-3-deoxygluconokinase (310 aa).

Substrate contacts are provided by residues 29 to 33 (GDTLN), Y89, 103 to 105 (YWR), and R171. ATP-binding positions include 169–171 (NYR), 229–234 (KRGADA), and 262–265 (AAGD). D265 lines the substrate pocket. The active-site Proton acceptor is the D265.

This sequence belongs to the carbohydrate kinase PfkB family.

It carries out the reaction 2-dehydro-3-deoxy-D-gluconate + ATP = 2-dehydro-3-deoxy-6-phospho-D-gluconate + ADP + H(+). The protein operates within carbohydrate acid metabolism; 2-dehydro-3-deoxy-D-gluconate degradation; D-glyceraldehyde 3-phosphate and pyruvate from 2-dehydro-3-deoxy-D-gluconate: step 1/2. Functionally, catalyzes the phosphorylation of 2-keto-3-deoxygluconate (KDG) to produce 2-keto-3-deoxy-6-phosphogluconate (KDPG). The protein is 2-dehydro-3-deoxygluconokinase of Dickeya dadantii (strain 3937) (Erwinia chrysanthemi (strain 3937)).